We begin with the raw amino-acid sequence, 291 residues long: Undecaprenyl-diphosphatase (291 aa).

8 helical membrane passes run 1–21 (MLILELIKGIILGIVEGLTEF), 48–68 (SAFTFKIVIQLGSVFAGAWVF), 99–119 (LHIIVGMIPAGVLGLLFDDVI), 123–143 (LFSVPTVMIGLFIGAIYMIIA), 159–179 (INYFQAFVIGLSQAIAMWPGF), 200–220 (SDFTFIMAVPVMLAASGLSLV), 236–256 (LGFLAAFIVGLIAIKTFLYLI), and 269–289 (IVLVIIIAILYFGFGIGQGIT).

Belongs to the UppP family.

The protein localises to the cell membrane. The catalysed reaction is di-trans,octa-cis-undecaprenyl diphosphate + H2O = di-trans,octa-cis-undecaprenyl phosphate + phosphate + H(+). In terms of biological role, catalyzes the dephosphorylation of undecaprenyl diphosphate (UPP). Confers resistance to bacitracin. This Staphylococcus saprophyticus subsp. saprophyticus (strain ATCC 15305 / DSM 20229 / NCIMB 8711 / NCTC 7292 / S-41) protein is Undecaprenyl-diphosphatase.